The sequence spans 279 residues: MKIISCIEELRDHLRGQLRTAFVPTMGNLHDGHLSLMRLARKHGDPVVASIFVNRLQFGPNEDFDRYPRTFQADVEKLEKEGVYILFAPTEKDLYPEPQEFRVQPPNDLGNTLEGEFRPGFFSGVTTIVLKLFSCVQPSVAVFGKKDYQQLMIVRNMSKQFALPTEIIAAETYRAEDGLALSSRNMYLSAEERAEAPALFKSLNAVANEVRSGHLDIFQLERQAMADLSQRGWKPDYISIRKRSNLQPPSAGDMAQGEKLVVLAAAKLGATRLIDNLEI.

Position 26-33 (26-33) interacts with ATP; sequence MGNLHDGH. The active-site Proton donor is the histidine 33. Glutamine 57 provides a ligand contact to (R)-pantoate. Glutamine 57 is a binding site for beta-alanine. Residue 144–147 participates in ATP binding; the sequence is GKKD. Glutamine 150 contacts (R)-pantoate. 181 to 184 is an ATP binding site; sequence LSSR.

Belongs to the pantothenate synthetase family. As to quaternary structure, homodimer.

It localises to the cytoplasm. It catalyses the reaction (R)-pantoate + beta-alanine + ATP = (R)-pantothenate + AMP + diphosphate + H(+). It participates in cofactor biosynthesis; (R)-pantothenate biosynthesis; (R)-pantothenate from (R)-pantoate and beta-alanine: step 1/1. In terms of biological role, catalyzes the condensation of pantoate with beta-alanine in an ATP-dependent reaction via a pantoyl-adenylate intermediate. The chain is Pantothenate synthetase from Herminiimonas arsenicoxydans.